The sequence spans 494 residues: 4-hydroxyphenylacetate 3-monooxygenase oxygenase component (494 aa).

Substrate is bound by residues 103–107 (RSPDY) and His-149. Residues 149-151 (HTL), 155-158 (QMNR), and Thr-192 contribute to the FAD site. 205-206 (ST) provides a ligand contact to substrate. Residue 455–458 (DPVR) participates in FAD binding.

Belongs to the FADH(2)-utilizing monooxygenase family. In terms of assembly, 4-HPA 3-monooxygenase consists of a reductase component HpaI and an oxygenase component HpaH.

The enzyme catalyses 4-hydroxyphenylacetate + FADH2 + O2 = 3,4-dihydroxyphenylacetate + FAD + H2O + H(+). It participates in aromatic compound metabolism; 4-hydroxyphenylacetate degradation; pyruvate and succinate semialdehyde from 4-hydroxyphenylacetate: step 1/7. Utilizes FADH(2) supplied by HpaI, to catalyze the hydroxylation of 4-hydroxyphenylacetic acid, leading to the production of 3,4-dihydroxyphenylacetic acid (DHPA). The sequence is that of 4-hydroxyphenylacetate 3-monooxygenase oxygenase component (hpaH) from Geobacillus sp. (strain PA-9).